Consider the following 462-residue polypeptide: Tubulin alpha-4 chain (462 aa).

Residues Gln11, Glu82, Ser151, Gly155, Thr156, Thr190, Asn217, and Asn239 each coordinate GTP. Glu82 is a Mg(2+) binding site. Residue Glu265 is part of the active site.

It belongs to the tubulin family. Dimer of alpha and beta chains. A typical microtubule is a hollow water-filled tube with an outer diameter of 25 nm and an inner diameter of 15 nM. Alpha-beta heterodimers associate head-to-tail to form protofilaments running lengthwise along the microtubule wall with the beta-tubulin subunit facing the microtubule plus end conferring a structural polarity. Microtubules usually have 13 protofilaments but different protofilament numbers can be found in some organisms and specialized cells. The cofactor is Mg(2+).

The protein localises to the cytoplasm. It localises to the cytoskeleton. The catalysed reaction is GTP + H2O = GDP + phosphate + H(+). Its function is as follows. Tubulin is the major constituent of microtubules, a cylinder consisting of laterally associated linear protofilaments composed of alpha- and beta-tubulin heterodimers. Microtubules grow by the addition of GTP-tubulin dimers to the microtubule end, where a stabilizing cap forms. Below the cap, tubulin dimers are in GDP-bound state, owing to GTPase activity of alpha-tubulin. The protein is Tubulin alpha-4 chain (alphaTub67C) of Drosophila melanogaster (Fruit fly).